Here is a 545-residue protein sequence, read N- to C-terminus: MTTNYIFVTGGVVSSLGKGIAAASLAAILEARGLNVTIMKLDPYINVDPGTMSPTQHGEVFVTEDGAETDLDLGHYERFIRTKMTRRNNFTTGRIYSEVLRKERRGDYLGATIQVIPHITNAIKERIIEGGEGHDVVLVEIGGTVGDIESLPFLEAIRQMAVDVGREHTLYMHLTLVPYLAAAGEVKTKPTQHSVKELLSIGIQPDVLICRSDRAVPANERAKIALFCNVPEKAVISLKDVDSIYKIPGLLKSQGLDDYICKRFSLTCPEANLAEWEQVLYEESNPGGEVTIGMIGKYVELPDAYKSVIEALKHGGLKNRLTVNIKLIDSQDVETRGEEMLKGLDAILIPGGFGYRGVEGKVLAARYAREHNIPYLGICLGMQVALMEFARNVAGMENANSTEFVPDCKYPVVALITEWRDEDGNVEVRTEESDLGGTMRVGGQQCHLTEGSLVRQMYGEPTIVERHRHRYEVNNMLLKQIEAAGLRVAGRSADNKLVEIIELPNHPWFVACQFHPEFTSTPRDGHPLFAGFVKAAGEYQKRQVK.

The interval 1 to 266 (MTTNYIFVTG…DDYICKRFSL (266 aa)) is amidoligase domain. Ser-14 contributes to the CTP binding site. Ser-14 contributes to the UTP binding site. ATP contacts are provided by residues 15–20 (SLGKGI) and Asp-72. Positions 72 and 140 each coordinate Mg(2+). CTP is bound by residues 147–149 (DIE), 187–192 (KTKPTQ), and Lys-223. UTP-binding positions include 187-192 (KTKPTQ) and Lys-223. 239-241 (KDV) contacts ATP. Residues 291-542 (TIGMIGKYVE…VKAAGEYQKR (252 aa)) form the Glutamine amidotransferase type-1 domain. Gly-352 is a binding site for L-glutamine. The active-site Nucleophile; for glutamine hydrolysis is the Cys-379. L-glutamine contacts are provided by residues 380 to 383 (LGMQ), Glu-403, and Arg-470. Catalysis depends on residues His-515 and Glu-517.

This sequence belongs to the CTP synthase family. In terms of assembly, homotetramer.

It catalyses the reaction UTP + L-glutamine + ATP + H2O = CTP + L-glutamate + ADP + phosphate + 2 H(+). The enzyme catalyses L-glutamine + H2O = L-glutamate + NH4(+). It carries out the reaction UTP + NH4(+) + ATP = CTP + ADP + phosphate + 2 H(+). The protein operates within pyrimidine metabolism; CTP biosynthesis via de novo pathway; CTP from UDP: step 2/2. With respect to regulation, allosterically activated by GTP, when glutamine is the substrate; GTP has no effect on the reaction when ammonia is the substrate. The allosteric effector GTP functions by stabilizing the protein conformation that binds the tetrahedral intermediate(s) formed during glutamine hydrolysis. Inhibited by the product CTP, via allosteric rather than competitive inhibition. Catalyzes the ATP-dependent amination of UTP to CTP with either L-glutamine or ammonia as the source of nitrogen. Regulates intracellular CTP levels through interactions with the four ribonucleotide triphosphates. The sequence is that of CTP synthase from Yersinia enterocolitica serotype O:8 / biotype 1B (strain NCTC 13174 / 8081).